The primary structure comprises 238 residues: Ribonuclease PH (238 aa).

Phosphate contacts are provided by residues arginine 86 and 124–126; that span reads GTR.

The protein belongs to the RNase PH family. In terms of assembly, homohexameric ring arranged as a trimer of dimers.

It carries out the reaction tRNA(n+1) + phosphate = tRNA(n) + a ribonucleoside 5'-diphosphate. Phosphorolytic 3'-5' exoribonuclease that plays an important role in tRNA 3'-end maturation. Removes nucleotide residues following the 3'-CCA terminus of tRNAs; can also add nucleotides to the ends of RNA molecules by using nucleoside diphosphates as substrates, but this may not be physiologically important. Probably plays a role in initiation of 16S rRNA degradation (leading to ribosome degradation) during starvation. In Cupriavidus metallidurans (strain ATCC 43123 / DSM 2839 / NBRC 102507 / CH34) (Ralstonia metallidurans), this protein is Ribonuclease PH.